A 90-amino-acid chain; its full sequence is Small ribosomal subunit protein uS15c (90 aa).

The protein belongs to the universal ribosomal protein uS15 family. In terms of assembly, part of the 30S ribosomal subunit.

The protein resides in the plastid. Its subcellular location is the chloroplast. The protein is Small ribosomal subunit protein uS15c (rps15-A) of Lolium perenne (Perennial ryegrass).